The primary structure comprises 311 residues: Lipoyl synthase (311 aa).

Cys-47, Cys-52, Cys-58, Cys-73, Cys-77, Cys-80, and Ser-287 together coordinate [4Fe-4S] cluster. One can recognise a Radical SAM core domain in the interval 59-276 (WTKKHATVMI…AQIARAKGFL (218 aa)).

This sequence belongs to the radical SAM superfamily. Lipoyl synthase family. [4Fe-4S] cluster is required as a cofactor.

The protein resides in the cytoplasm. The catalysed reaction is [[Fe-S] cluster scaffold protein carrying a second [4Fe-4S](2+) cluster] + N(6)-octanoyl-L-lysyl-[protein] + 2 oxidized [2Fe-2S]-[ferredoxin] + 2 S-adenosyl-L-methionine + 4 H(+) = [[Fe-S] cluster scaffold protein] + N(6)-[(R)-dihydrolipoyl]-L-lysyl-[protein] + 4 Fe(3+) + 2 hydrogen sulfide + 2 5'-deoxyadenosine + 2 L-methionine + 2 reduced [2Fe-2S]-[ferredoxin]. Its pathway is protein modification; protein lipoylation via endogenous pathway; protein N(6)-(lipoyl)lysine from octanoyl-[acyl-carrier-protein]: step 2/2. Its function is as follows. Catalyzes the radical-mediated insertion of two sulfur atoms into the C-6 and C-8 positions of the octanoyl moiety bound to the lipoyl domains of lipoate-dependent enzymes, thereby converting the octanoylated domains into lipoylated derivatives. This chain is Lipoyl synthase, found in Sphingopyxis alaskensis (strain DSM 13593 / LMG 18877 / RB2256) (Sphingomonas alaskensis).